A 95-amino-acid polypeptide reads, in one-letter code: Aspartyl/glutamyl-tRNA(Asn/Gln) amidotransferase subunit C (95 aa).

Belongs to the GatC family. As to quaternary structure, heterotrimer of A, B and C subunits.

It carries out the reaction L-glutamyl-tRNA(Gln) + L-glutamine + ATP + H2O = L-glutaminyl-tRNA(Gln) + L-glutamate + ADP + phosphate + H(+). The catalysed reaction is L-aspartyl-tRNA(Asn) + L-glutamine + ATP + H2O = L-asparaginyl-tRNA(Asn) + L-glutamate + ADP + phosphate + 2 H(+). Functionally, allows the formation of correctly charged Asn-tRNA(Asn) or Gln-tRNA(Gln) through the transamidation of misacylated Asp-tRNA(Asn) or Glu-tRNA(Gln) in organisms which lack either or both of asparaginyl-tRNA or glutaminyl-tRNA synthetases. The reaction takes place in the presence of glutamine and ATP through an activated phospho-Asp-tRNA(Asn) or phospho-Glu-tRNA(Gln). In Bradyrhizobium sp. (strain BTAi1 / ATCC BAA-1182), this protein is Aspartyl/glutamyl-tRNA(Asn/Gln) amidotransferase subunit C.